The primary structure comprises 609 residues: Aspartate--tRNA(Asp/Asn) ligase (609 aa).

E175 serves as a coordination point for L-aspartate. The interval 199–202 is aspartate; that stretch reads QQFK. L-aspartate is bound by residues R221 and H468. 221–223 serves as a coordination point for ATP; sequence RDE. Position 502 (E502) interacts with ATP. R509 lines the L-aspartate pocket. 554-557 is a binding site for ATP; the sequence is GIDR.

Belongs to the class-II aminoacyl-tRNA synthetase family. Type 1 subfamily. In terms of assembly, homodimer.

It is found in the cytoplasm. It catalyses the reaction tRNA(Asx) + L-aspartate + ATP = L-aspartyl-tRNA(Asx) + AMP + diphosphate. Aspartyl-tRNA synthetase with relaxed tRNA specificity since it is able to aspartylate not only its cognate tRNA(Asp) but also tRNA(Asn). Reaction proceeds in two steps: L-aspartate is first activated by ATP to form Asp-AMP and then transferred to the acceptor end of tRNA(Asp/Asn). This Caulobacter sp. (strain K31) protein is Aspartate--tRNA(Asp/Asn) ligase.